We begin with the raw amino-acid sequence, 391 residues long: Cyclin-B1-2 (391 aa).

This sequence belongs to the cyclin family. Cyclin AB subfamily.

This is Cyclin-B1-2 (CYCB1-2) from Oryza sativa subsp. japonica (Rice).